A 669-amino-acid chain; its full sequence is DNA ligase (669 aa).

NAD(+) contacts are provided by residues D31–D35, S80–L81, and E112. Residue K114 is the N6-AMP-lysine intermediate of the active site. NAD(+)-binding residues include R135, E172, K289, and K313. Zn(2+) contacts are provided by C407, C410, C425, and C430. The BRCT domain maps to T591–P669.

It belongs to the NAD-dependent DNA ligase family. LigA subfamily. The cofactor is Mg(2+). Requires Mn(2+) as cofactor.

It catalyses the reaction NAD(+) + (deoxyribonucleotide)n-3'-hydroxyl + 5'-phospho-(deoxyribonucleotide)m = (deoxyribonucleotide)n+m + AMP + beta-nicotinamide D-nucleotide.. In terms of biological role, DNA ligase that catalyzes the formation of phosphodiester linkages between 5'-phosphoryl and 3'-hydroxyl groups in double-stranded DNA using NAD as a coenzyme and as the energy source for the reaction. It is essential for DNA replication and repair of damaged DNA. The sequence is that of DNA ligase from Synechocystis sp. (strain ATCC 27184 / PCC 6803 / Kazusa).